We begin with the raw amino-acid sequence, 100 residues long: Urease subunit gamma (100 aa).

The protein belongs to the urease gamma subunit family. In terms of assembly, heterotrimer of UreA (gamma), UreB (beta) and UreC (alpha) subunits. Three heterotrimers associate to form the active enzyme.

The protein resides in the cytoplasm. The enzyme catalyses urea + 2 H2O + H(+) = hydrogencarbonate + 2 NH4(+). The protein operates within nitrogen metabolism; urea degradation; CO(2) and NH(3) from urea (urease route): step 1/1. The sequence is that of Urease subunit gamma from Pseudomonas fluorescens (strain Pf0-1).